We begin with the raw amino-acid sequence, 97 residues long: Type VII secretion system extracellular protein A (97 aa).

The stretch at 61–93 forms a coiled coil; it reads KVEKFAQLLEEIKQQLNSTADAVQEQDQQLSNN.

This sequence belongs to the WXG100 family. sagEsxA-like subfamily. Forms both homodimers and heterodimers with EsxC.

Its subcellular location is the secreted. In terms of biological role, virulence factor that is important for the establishment of infection in the host. EsxA is required for EsxB synthesis as well as secretion. Modulates host cell apoptotic pathways and mediates together with EsxB the release of S.aureus from the host cell. By acting on apoptosis, plays a role in the modulation of dendritic cell-mediated immunity. This Staphylococcus aureus (strain USA300) protein is Type VII secretion system extracellular protein A.